The following is a 106-amino-acid chain: MVNIPKTRRTYCKGKTCKKHTPHKVTQYKKGKDSIFAQGKRRYDRKQSGYGGQTKPVFHKKAKTTKKVVLRLECTVCKYKMQVSLKRCKHFELGGEKKTKGAALTF.

Residues 36-56 (FAQGKRRYDRKQSGYGGQTKP) are disordered.

This sequence belongs to the eukaryotic ribosomal protein eL42 family.

The protein is Large ribosomal subunit protein eL42 (RPL44) of Coprinopsis cinerea (strain Okayama-7 / 130 / ATCC MYA-4618 / FGSC 9003) (Inky cap fungus).